Reading from the N-terminus, the 589-residue chain is Putative sphingomyelin phosphodiesterase asm-3 (589 aa).

An N-terminal signal peptide occupies residues 1–17 (MLLGLLVLSLAFQGTLA). The Saposin B-type domain maps to 18–101 (VTECEECKSI…LMKNDCGDFV (84 aa)). 3 disulfide bridges follow: C21–C97, C24–C89, and C52–C63. An N-linked (GlcNAc...) asparagine glycan is attached at N109. D139 and H141 together coordinate Zn(2+). Disulfide bonds link C154–C159 and C160–C188. D217 is a binding site for Zn(2+). N237 is a glycosylation site (N-linked (GlcNAc...) asparagine). N257 contributes to the Zn(2+) binding site. N-linked (GlcNAc...) asparagine glycosylation is present at N334. The Zn(2+) site is built by H364, H398, and H400. An N-linked (GlcNAc...) asparagine glycan is attached at N463. Intrachain disulfides connect C530–C535 and C541–C553. A disordered region spans residues 562–589 (KPEPKKNKYSARFATSNERRRGKEECKI). Basic and acidic residues predominate over residues 578–589 (NERRRGKEECKI).

It belongs to the acid sphingomyelinase family. It depends on Zn(2+) as a cofactor.

The protein localises to the secreted. The enzyme catalyses an N-(acyl)-sphingosylphosphocholine + H2O = an N-acyl-sphingoid base + phosphocholine + H(+). It catalyses the reaction a sphingomyelin + H2O = phosphocholine + an N-acylsphing-4-enine + H(+). The catalysed reaction is an N-acyl-15-methylhexadecasphing-4-enine-1-phosphocholine + H2O = an N-acyl-15-methylhexadecasphing-4-enine + phosphocholine + H(+). Its pathway is lipid metabolism; sphingolipid metabolism. Converts sphingomyelin to ceramide (N-acyl-sphingoid base) and phosphocholine. C.elegans contain specific sphingoid bases, which are unique or different in structure compared to the sphingoid bases found in other animals. Two examples of these distinctive compounds are: 15-methylhexadecasphinganine and 15-methylhexadecasphing-4-enine. This is Putative sphingomyelin phosphodiesterase asm-3 (asm-3) from Caenorhabditis elegans.